The primary structure comprises 85 residues: Sec-independent protein translocase protein TatA (85 aa).

The chain crosses the membrane as a helical span at residues 1–21 (MGIFDWKHWLIILIVVVLVFG). The tract at residues 43 to 85 (VNTEEGENRPAEPQTGTSAGDTLNKTQTIEGQAQKVDTPVRKD) is disordered. The span at 56–73 (QTGTSAGDTLNKTQTIEG) shows a compositional bias: polar residues.

This sequence belongs to the TatA/E family. As to quaternary structure, the Tat system comprises two distinct complexes: a TatABC complex, containing multiple copies of TatA, TatB and TatC subunits, and a separate TatA complex, containing only TatA subunits. Substrates initially bind to the TatABC complex, which probably triggers association of the separate TatA complex to form the active translocon.

The protein resides in the cell inner membrane. Part of the twin-arginine translocation (Tat) system that transports large folded proteins containing a characteristic twin-arginine motif in their signal peptide across membranes. TatA could form the protein-conducting channel of the Tat system. This Azotobacter vinelandii (strain DJ / ATCC BAA-1303) protein is Sec-independent protein translocase protein TatA.